The sequence spans 110 residues: Large ribosomal subunit protein uL24 (110 aa).

It belongs to the universal ribosomal protein uL24 family. Part of the 50S ribosomal subunit.

Its function is as follows. One of two assembly initiator proteins, it binds directly to the 5'-end of the 23S rRNA, where it nucleates assembly of the 50S subunit. One of the proteins that surrounds the polypeptide exit tunnel on the outside of the subunit. The sequence is that of Large ribosomal subunit protein uL24 from Chloroflexus aurantiacus (strain ATCC 29366 / DSM 635 / J-10-fl).